Consider the following 894-residue polypeptide: Phosphoenolpyruvate carboxylase (894 aa).

Catalysis depends on residues histidine 143 and lysine 556.

Belongs to the PEPCase type 1 family. The cofactor is Mg(2+).

The catalysed reaction is oxaloacetate + phosphate = phosphoenolpyruvate + hydrogencarbonate. In terms of biological role, forms oxaloacetate, a four-carbon dicarboxylic acid source for the tricarboxylic acid cycle. This chain is Phosphoenolpyruvate carboxylase, found in Acinetobacter baumannii (strain ATCC 17978 / DSM 105126 / CIP 53.77 / LMG 1025 / NCDC KC755 / 5377).